The sequence spans 132 residues: MRHGVSYRKFSRPTAHRMAMMMNLAVSLVTSERIVTTLPKAKDLRSVVEGLITIAKRYSQKDPVCGRRLLLSRTSGNSSVTNKLLGVLAQRYKNRNGGYTRIMKNGFRKGDCAPIAIIELVDREKDLKVIGS.

The protein belongs to the bacterial ribosomal protein bL17 family. In terms of assembly, part of the 50S ribosomal subunit. Contacts protein L32.

This Anaplasma phagocytophilum (strain HZ) protein is Large ribosomal subunit protein bL17.